Consider the following 505-residue polypeptide: Xylose import ATP-binding protein XylG (505 aa).

2 consecutive ABC transporter domains span residues 6 to 243 (LEMR…VGRE) and 262 to 505 (VKNY…TGGK). 38–45 (GENGAGKS) contacts ATP.

Belongs to the ABC transporter superfamily. Xylose importer (TC 3.A.1.2.4) family. As to quaternary structure, the complex is composed of two ATP-binding proteins (XylG), two transmembrane proteins (XylH) and a solute-binding protein (XylF).

The protein resides in the cell membrane. The catalysed reaction is D-xylose(out) + ATP + H2O = D-xylose(in) + ADP + phosphate + H(+). In terms of biological role, part of the ABC transporter complex XylFGH involved in xylose import. Responsible for energy coupling to the transport system. This chain is Xylose import ATP-binding protein XylG, found in Thermoanaerobacter pseudethanolicus (strain ATCC 33223 / 39E) (Clostridium thermohydrosulfuricum).